The primary structure comprises 131 residues: Small ribosomal subunit protein uS8 (131 aa).

The disordered stretch occupies residues 1–27; the sequence is MSMTDPVADMLTRIRNGQRASKNEVSM.

The protein belongs to the universal ribosomal protein uS8 family. Part of the 30S ribosomal subunit. Contacts proteins S5 and S12.

One of the primary rRNA binding proteins, it binds directly to 16S rRNA central domain where it helps coordinate assembly of the platform of the 30S subunit. The polypeptide is Small ribosomal subunit protein uS8 (Thioalkalivibrio sulfidiphilus (strain HL-EbGR7)).